The following is a 264-amino-acid chain: Short chain dehydrogenase CPUR_05429 (264 aa).

4 residues coordinate NADP(+): I24, D70, N97, and R130. Residues S146 and S147 each act as proton donor in the active site. The NADP(+) site is built by Y161, K165, and T196. Y161 serves as the catalytic Proton acceptor. K165 serves as the catalytic Lowers pKa of active site Tyr.

Belongs to the short-chain dehydrogenases/reductases (SDR) family.

It participates in pigment biosynthesis. In terms of biological role, short chain dehydrogenase; part of the ergochrome gene cluster responsible for the typical purple-black color of the ergot sclerotia. The ergochrome gene cluster produces several ergot pigments including the yellow ergochrome secalonic acid and its derivatives, as well as the red anthraquinones endocrocin and clavorubin. The pathway begins with the synthesis of atrochrysone thioester by the polyketide synthase (PKS) CPUR_05437. The atrochrysone carboxyl ACP thioesterase CPUR_05436 then breaks the thioester bond and releases the atrochrysone carboxylic acid from CPUR_05437. The atrochrysone carboxylic acid is then converted to atrochrysone which is further transformed into emodin anthrone. The next step is performed by the anthrone oxygenase CPUR_05434 that catalyzes the oxidation of emodinanthrone to emodin. Emodin is further modified to yield monodictyphenone via several steps involving CPUR_05427, CPUR_05428, CPUR_05429 and CPUR_05430. The short chain dehydrogenase/reductase CPUR_05418 then catalyzes the C-5 ketoreduction to give the xanthone skeleton of the monomeric units. Ergochromes formation requires further dimerization steps of different xanthone units, probably catalyzed by the cytochrome P450 monooxygenase CPUR_05419. CPUR_05425, CPUR_05426 and CPUR_05431 are unique to Claviceps, thus it is likely that they are involved in further modification of xanthone units or in their dimerization. The yellow ergochromes and the red anthraquinone pigments endocrocin and clavorubin are products from the same PKS derived precursors and the latter are likely shunt products in the pathway of xanthone biosynthesis. It is proposed that atrochrysone carboxylic acid released from the PKS CPUR_05437 can also be converted to endocrocin anthrone which is further oxidized into endocrocin by CPUR_05435. Endocrocin could be then modified to clavorubin, possibly by CPUR_05423 and CPUR_05431. Clavorubin is the principal anthraquinone metabolite produced by the cluster with a much higher yield compared to endocrocin. This chain is Short chain dehydrogenase CPUR_05429, found in Claviceps purpurea (strain 20.1) (Ergot fungus).